We begin with the raw amino-acid sequence, 745 residues long: AMP deaminase 1 (745 aa).

Residue Thr79 is modified to Phosphothreonine. At Ser83 the chain carries Phosphoserine. Residue Tyr214 is modified to Phosphotyrosine. Residues His301 and His303 each coordinate Zn(2+). Residues His303 and 372 to 377 (KFNDKY) contribute to the substrate site. At Ser439 the chain carries Phosphoserine. His570 contacts Zn(2+). Glu573 contacts substrate. The Proton acceptor role is filled by His592. A Zn(2+)-binding site is contributed by Asp647. A substrate-binding site is contributed by 648–651 (DPMQ).

The protein belongs to the metallo-dependent hydrolases superfamily. Adenosine and AMP deaminases family. Homotetramer. Zn(2+) is required as a cofactor.

The enzyme catalyses AMP + H2O + H(+) = IMP + NH4(+). It functions in the pathway purine metabolism; IMP biosynthesis via salvage pathway; IMP from AMP: step 1/1. Its function is as follows. AMP deaminase plays a critical role in energy metabolism. This Mus musculus (Mouse) protein is AMP deaminase 1.